A 101-amino-acid polypeptide reads, in one-letter code: Protein RALF-like 14 (101 aa).

A signal peptide spans 1-21 (MKLLIFAVIISVVLFPVLVSS). Residues 22 to 56 (RTIKCDQLSGKCINGEEKEIMNMRLGLDVSSRRIL) constitute a propeptide, removed in mature form. An intrachain disulfide couples Cys90 to Cys96.

It belongs to the plant rapid alkalinization factor (RALF) family. In terms of processing, proteolytically cleaved, probably by S1P, a subtilisin-like serine protease (subtilase).

The protein resides in the secreted. Its function is as follows. Cell signaling peptide that may regulate plant stress, growth, and development. Mediates a rapid alkalinization of extracellular space by mediating a transient increase in the cytoplasmic Ca(2+) concentration leading to a calcium-dependent signaling events through a cell surface receptor and a concomitant activation of some intracellular mitogen-activated protein kinases. The chain is Protein RALF-like 14 (RALFL14) from Arabidopsis thaliana (Mouse-ear cress).